Reading from the N-terminus, the 488-residue chain is Phenylalanine--tRNA ligase alpha subunit (488 aa).

L-phenylalanine-binding positions include Thr-315, 354 to 356 (QLD), Phe-394, and Phe-419.

The protein belongs to the class-II aminoacyl-tRNA synthetase family. Phe-tRNA synthetase alpha subunit type 2 subfamily. In terms of assembly, tetramer of two alpha and two beta subunits. The cofactor is Mg(2+).

The protein localises to the cytoplasm. The enzyme catalyses tRNA(Phe) + L-phenylalanine + ATP = L-phenylalanyl-tRNA(Phe) + AMP + diphosphate + H(+). The protein is Phenylalanine--tRNA ligase alpha subunit of Pyrobaculum calidifontis (strain DSM 21063 / JCM 11548 / VA1).